Here is a 573-residue protein sequence, read N- to C-terminus: 2-isopropylmalate synthase (573 aa).

In terms of domain architecture, Pyruvate carboxyltransferase spans 37–314; the sequence is PRWLSTDLRD…DPQIDFSNID (278 aa). 4 residues coordinate Mg(2+): Asp-46, His-253, His-255, and Asn-289. Positions 456-573 are regulatory domain; it reads NPRNPWGRIQ…VVSAVNRAAR (118 aa).

This sequence belongs to the alpha-IPM synthase/homocitrate synthase family. LeuA type 2 subfamily. Homodimer. It depends on Mg(2+) as a cofactor.

Its subcellular location is the cytoplasm. It catalyses the reaction 3-methyl-2-oxobutanoate + acetyl-CoA + H2O = (2S)-2-isopropylmalate + CoA + H(+). Its pathway is amino-acid biosynthesis; L-leucine biosynthesis; L-leucine from 3-methyl-2-oxobutanoate: step 1/4. Functionally, catalyzes the condensation of the acetyl group of acetyl-CoA with 3-methyl-2-oxobutanoate (2-ketoisovalerate) to form 3-carboxy-3-hydroxy-4-methylpentanoate (2-isopropylmalate). The sequence is that of 2-isopropylmalate synthase from Streptomyces avermitilis (strain ATCC 31267 / DSM 46492 / JCM 5070 / NBRC 14893 / NCIMB 12804 / NRRL 8165 / MA-4680).